The primary structure comprises 192 residues: Interleukin-18 (192 aa).

A propeptide spanning residues 1–35 (MAAMSEDSCVNFKEMMFIDNTLYFIPEENGDLESD) is cleaved from the precursor.

Belongs to the IL-1 family. In terms of assembly, forms a ternary complex with ligand-binding receptor subunit IL18R1 and signaling receptor subunit IL18RAP at the plasma membrane. Mature IL18 first binds to IL18R1 forming a low affinity binary complex, which then interacts with IL18RAP to form a high affinity ternary complex that signals inside the cell. Interacts with cargo receptor TMED10; the interaction mediates the translocation from the cytoplasm into the ERGIC (endoplasmic reticulum-Golgi intermediate compartment) and thereby secretion. In terms of processing, the pro-IL-18 precursor is processed by CASP1 to yield its mature, active form. The pro-IL-18 precursor is however not processed by Casp4/Casp11 in rodents. The pro-IL-18 precursor features autoinhibitory interactions between the propeptide and the post-cleavage-site region, preventing recognition by the IL18R1 receptor. Processing by CASP1 induces conformational changes to generate critical receptor-binding sites. The mature form is then secreted and released in the extracellular milieu by passing through the gasdermin-D (GSDMD) pore. In contrast, cleavage by CASP3 inactivates IL18.

It is found in the cytoplasm. The protein resides in the secreted. Pro-inflammatory cytokine primarily involved in epithelial barrier repair, polarized T-helper 1 (Th1) cell and natural killer (NK) cell immune responses. Upon binding to IL18R1 and IL18RAP, forms a signaling ternary complex which activates NF-kappa-B, triggering synthesis of inflammatory mediators. Synergizes with IL12/interleukin-12 to induce IFNG synthesis from T-helper 1 (Th1) cells and natural killer (NK) cells. Involved in transduction of inflammation downstream of pyroptosis: its mature form is specifically released in the extracellular milieu by passing through the gasdermin-D (GSDMD) pore. In Mus musculus (Mouse), this protein is Interleukin-18.